The primary structure comprises 503 residues: Maturase K (503 aa).

The protein belongs to the intron maturase 2 family. MatK subfamily.

The protein resides in the plastid. The protein localises to the chloroplast. Usually encoded in the trnK tRNA gene intron. Probably assists in splicing its own and other chloroplast group II introns. The protein is Maturase K of Agonis flexuosa (Australian willow myrtle).